The following is a 766-amino-acid chain: ATP-dependent RNA helicase DBP4 (766 aa).

The span at 1 to 18 (MGKKQNNRKVVKSQRKSH) shows a compositional bias: basic residues. The segment at 1–25 (MGKKQNNRKVVKSQRKSHREKEEET) is disordered. A Q motif motif is present at residues 46–74 (SQFSDLPISEETARGLKEASFASLTDIQK). The Helicase ATP-binding domain maps to 77 to 251 (IPISLKGEDV…RLSLANPKRV (175 aa)). 90-97 (AKTGSGKT) contributes to the ATP binding site. The DEAD box motif lies at 199–202 (DEAD). In terms of domain architecture, Helicase C-terminal spans 265–437 (SLEQYYIKIP…TIRPQLQSLC (173 aa)). 3 disordered regions span residues 488–525 (KIKF…EEDK), 572–614 (KRQD…ANKL), and 649–752 (NKET…EPQT). Basic and acidic residues-rich tracts occupy residues 493–502 (GGSDNKEKKN), 572–581 (KRQDHELRDD), 660–671 (IEDKLTAKEKRQ), 678–687 (KEMEKNMRQE), and 709–738 (DRDL…NVNK). The span at 739–752 (DEDDGVVEYDEPQT) shows a compositional bias: acidic residues.

This sequence belongs to the DEAD box helicase family. DDX10/DBP4 subfamily. In terms of assembly, interacts with the U3 and U14 snoRNAs. Associates with pre-ribosomal complexes.

It is found in the nucleus. It localises to the nucleolus. It carries out the reaction ATP + H2O = ADP + phosphate + H(+). In terms of biological role, ATP-dependent RNA helicase required for ribosome biogenesis. Involved in the release of U14 snoRNA in pre-ribosomal complexes. Required for pre-rRNA cleavage at site A2. This chain is ATP-dependent RNA helicase DBP4 (DBP4), found in Debaryomyces hansenii (strain ATCC 36239 / CBS 767 / BCRC 21394 / JCM 1990 / NBRC 0083 / IGC 2968) (Yeast).